We begin with the raw amino-acid sequence, 537 residues long: Trypsin-resistant surface T6 protein (537 aa).

Positions 1-22 are cleaved as a signal peptide; that stretch reads MLACLAILAVVGLGMTRVSALS. Residues 310–330 form a hydrophilic region; it reads GNTYDNLDKKPDKGNGITSKE. An LPXTG sorting signal motif is present at residues 504–508; sequence LPSTG. Threonine 507 carries the post-translational modification Pentaglycyl murein peptidoglycan amidated threonine. The propeptide at 508–537 is removed by sortase; the sequence is GSIGTYLFKAIGSAAMIGAIGIYIVKRRKA.

Its subcellular location is the secreted. It is found in the cell wall. The protein is Trypsin-resistant surface T6 protein (tee6) of Streptococcus pyogenes serotype M6 (strain ATCC BAA-946 / MGAS10394).